Consider the following 72-residue polypeptide: MAQPDSSSLAEVLDRVLDKGIVVDTFARISLVGIEILTVEARVVVASVDTFLHYAEEIAKIEQAELTAGAEA.

Belongs to the gas vesicle GvpA family. The gas vesicle shell is 2 nm thick and consists of a single layer of this protein. It forms helical ribs nearly perpendicular to the long axis of the vesicle.

The protein resides in the gas vesicle shell. Its function is as follows. Gas vesicles are hollow, gas filled proteinaceous nanostructures found in some microorganisms. During planktonic growth they allow positioning of the organism at a favorable depth for light or nutrient acquisition. GvpA forms the protein shell. The protein is Gas vesicle protein A of Haloquadratum walsbyi (strain DSM 16790 / HBSQ001).